The chain runs to 75 residues: Small ribosomal subunit protein bS18 (75 aa).

The protein belongs to the bacterial ribosomal protein bS18 family. In terms of assembly, part of the 30S ribosomal subunit. Forms a tight heterodimer with protein bS6.

Binds as a heterodimer with protein bS6 to the central domain of the 16S rRNA, where it helps stabilize the platform of the 30S subunit. The chain is Small ribosomal subunit protein bS18 from Pseudoalteromonas translucida (strain TAC 125).